A 61-amino-acid chain; its full sequence is MAKKSMIAKQKRTPKFKVQEYTRCERCGRPHSVIRKFKLCRICFRELAYKGQIPGVKKASW.

Residues Cys-24, Cys-27, Cys-40, and Cys-43 each coordinate Zn(2+).

This sequence belongs to the universal ribosomal protein uS14 family. Zinc-binding uS14 subfamily. Part of the 30S ribosomal subunit. Contacts proteins S3 and S10. Requires Zn(2+) as cofactor.

Its function is as follows. Binds 16S rRNA, required for the assembly of 30S particles and may also be responsible for determining the conformation of the 16S rRNA at the A site. This Bacillus licheniformis (strain ATCC 14580 / DSM 13 / JCM 2505 / CCUG 7422 / NBRC 12200 / NCIMB 9375 / NCTC 10341 / NRRL NRS-1264 / Gibson 46) protein is Small ribosomal subunit protein uS14B.